A 386-amino-acid chain; its full sequence is GTPase Obg (386 aa).

The 159-residue stretch at M1 to L159 folds into the Obg domain. The region spanning A160–E333 is the OBG-type G domain. GTP-binding positions include G166–S173, F191–V195, D213–G216, N283–D286, and A314–I316. Mg(2+) is bound by residues S173 and T193.

Belongs to the TRAFAC class OBG-HflX-like GTPase superfamily. OBG GTPase family. In terms of assembly, monomer. Mg(2+) serves as cofactor.

The protein resides in the cytoplasm. Functionally, an essential GTPase which binds GTP, GDP and possibly (p)ppGpp with moderate affinity, with high nucleotide exchange rates and a fairly low GTP hydrolysis rate. Plays a role in control of the cell cycle, stress response, ribosome biogenesis and in those bacteria that undergo differentiation, in morphogenesis control. The protein is GTPase Obg of Psychromonas ingrahamii (strain DSM 17664 / CCUG 51855 / 37).